Reading from the N-terminus, the 210-residue chain is Mating-type-like protein A1 (210 aa).

The homeobox DNA-binding region spans 141-200 (SKKKRQRLDNSTKEFLEKVFEKNKQPNRRERELIAEKHGVSLSQIRVWFTNKRMRKKEPK).

It belongs to the MATA1 family. In terms of assembly, forms a heterodimer with ALPHA2.

The protein localises to the nucleus. Its function is as follows. Mating type proteins are sequence specific DNA-binding proteins that act as master switches in yeast differentiation by controlling gene expression in a cell type-specific fashion. Transcriptional corepressor that acts in conjunction with ALPHA2 to repress transcription both of homozygote-specific genes and of genes necessary for the white-opaque switch, a prerequisite for mating. The sequence is that of Mating-type-like protein A1 (MTLA1) from Candida albicans (strain SC5314 / ATCC MYA-2876) (Yeast).